We begin with the raw amino-acid sequence, 354 residues long: Holliday junction branch migration complex subunit RuvB (354 aa).

Positions 1 to 22 (MTIQTDDFAPAPPRVVSAAPAS) are disordered. A large ATPase domain (RuvB-L) region spans residues 5-193 (TDDFAPAPPR…FGIVARLEFY (189 aa)). ATP-binding positions include leucine 32, arginine 33, glycine 74, lysine 77, threonine 78, threonine 79, 140–142 (EDY), arginine 183, tyrosine 193, and arginine 230. Threonine 78 is a Mg(2+) binding site. The segment at 194–264 (TPEELALIVR…IAHKALVMLD (71 aa)) is small ATPAse domain (RuvB-S). The segment at 267–354 (PQGFDLMDRK…RSDGQDLFGI (88 aa)) is head domain (RuvB-H). Residues arginine 303, arginine 322, and arginine 327 each contribute to the DNA site.

The protein belongs to the RuvB family. In terms of assembly, homohexamer. Forms an RuvA(8)-RuvB(12)-Holliday junction (HJ) complex. HJ DNA is sandwiched between 2 RuvA tetramers; dsDNA enters through RuvA and exits via RuvB. An RuvB hexamer assembles on each DNA strand where it exits the tetramer. Each RuvB hexamer is contacted by two RuvA subunits (via domain III) on 2 adjacent RuvB subunits; this complex drives branch migration. In the full resolvosome a probable DNA-RuvA(4)-RuvB(12)-RuvC(2) complex forms which resolves the HJ.

It is found in the cytoplasm. The catalysed reaction is ATP + H2O = ADP + phosphate + H(+). Its function is as follows. The RuvA-RuvB-RuvC complex processes Holliday junction (HJ) DNA during genetic recombination and DNA repair, while the RuvA-RuvB complex plays an important role in the rescue of blocked DNA replication forks via replication fork reversal (RFR). RuvA specifically binds to HJ cruciform DNA, conferring on it an open structure. The RuvB hexamer acts as an ATP-dependent pump, pulling dsDNA into and through the RuvAB complex. RuvB forms 2 homohexamers on either side of HJ DNA bound by 1 or 2 RuvA tetramers; 4 subunits per hexamer contact DNA at a time. Coordinated motions by a converter formed by DNA-disengaged RuvB subunits stimulates ATP hydrolysis and nucleotide exchange. Immobilization of the converter enables RuvB to convert the ATP-contained energy into a lever motion, pulling 2 nucleotides of DNA out of the RuvA tetramer per ATP hydrolyzed, thus driving DNA branch migration. The RuvB motors rotate together with the DNA substrate, which together with the progressing nucleotide cycle form the mechanistic basis for DNA recombination by continuous HJ branch migration. Branch migration allows RuvC to scan DNA until it finds its consensus sequence, where it cleaves and resolves cruciform DNA. The protein is Holliday junction branch migration complex subunit RuvB of Variovorax paradoxus (strain S110).